A 353-amino-acid chain; its full sequence is Photosystem II protein D1 (353 aa).

Thr-2 carries the N-acetylthreonine modification. Phosphothreonine is present on Thr-2. 3 helical membrane passes run 29 to 46 (YIGWFGVLMIPTLLTATS), 118 to 133 (HFLLGVACYMGREWEL), and 142 to 156 (WIAVAYSAPVAAATA). His-118 contributes to the chlorophyll a binding site. Residue Tyr-126 participates in pheophytin a binding. 2 residues coordinate [CaMn4O5] cluster: Asp-170 and Glu-189. A helical membrane pass occupies residues 197-218 (FHMLGVAGVFGGSLFSAMHGSL). His-198 contacts chlorophyll a. Residues His-215 and 264–265 (SF) each bind a quinone. Fe cation is bound at residue His-215. His-272 serves as a coordination point for Fe cation. Residues 274–288 (FLAAWPVVGIWFTAL) form a helical membrane-spanning segment. Residues His-332, Glu-333, Asp-342, and Ala-344 each coordinate [CaMn4O5] cluster. Residues 345 to 353 (VVEAPSTNG) constitute a propeptide that is removed on maturation.

The protein belongs to the reaction center PufL/M/PsbA/D family. In terms of assembly, PSII is composed of 1 copy each of membrane proteins PsbA, PsbB, PsbC, PsbD, PsbE, PsbF, PsbH, PsbI, PsbJ, PsbK, PsbL, PsbM, PsbT, PsbX, PsbY, PsbZ, Psb30/Ycf12, at least 3 peripheral proteins of the oxygen-evolving complex and a large number of cofactors. It forms dimeric complexes. The D1/D2 heterodimer binds P680, chlorophylls that are the primary electron donor of PSII, and subsequent electron acceptors. It shares a non-heme iron and each subunit binds pheophytin, quinone, additional chlorophylls, carotenoids and lipids. D1 provides most of the ligands for the Mn4-Ca-O5 cluster of the oxygen-evolving complex (OEC). There is also a Cl(-1) ion associated with D1 and D2, which is required for oxygen evolution. The PSII complex binds additional chlorophylls, carotenoids and specific lipids. serves as cofactor. In terms of processing, tyr-161 forms a radical intermediate that is referred to as redox-active TyrZ, YZ or Y-Z. C-terminally processed by CTPA; processing is essential to allow assembly of the oxygen-evolving complex and thus photosynthetic growth.

The protein localises to the plastid. The protein resides in the chloroplast thylakoid membrane. It catalyses the reaction 2 a plastoquinone + 4 hnu + 2 H2O = 2 a plastoquinol + O2. Functionally, photosystem II (PSII) is a light-driven water:plastoquinone oxidoreductase that uses light energy to abstract electrons from H(2)O, generating O(2) and a proton gradient subsequently used for ATP formation. It consists of a core antenna complex that captures photons, and an electron transfer chain that converts photonic excitation into a charge separation. The D1/D2 (PsbA/PsbD) reaction center heterodimer binds P680, the primary electron donor of PSII as well as several subsequent electron acceptors. The sequence is that of Photosystem II protein D1 from Aethionema grandiflorum (Persian stone-cress).